Here is a 332-residue protein sequence, read N- to C-terminus: Ferredoxin--NADP reductase (332 aa).

The FAD site is built by Glu-35, Gln-43, Tyr-48, Val-88, Phe-122, Asp-286, and Ser-326.

Belongs to the ferredoxin--NADP reductase type 2 family. As to quaternary structure, homodimer. It depends on FAD as a cofactor.

It catalyses the reaction 2 reduced [2Fe-2S]-[ferredoxin] + NADP(+) + H(+) = 2 oxidized [2Fe-2S]-[ferredoxin] + NADPH. This Limosilactobacillus reuteri (strain DSM 20016) (Lactobacillus reuteri) protein is Ferredoxin--NADP reductase.